Here is a 383-residue protein sequence, read N- to C-terminus: Succinyl-diaminopimelate desuccinylase (383 aa).

Histidine 72 contributes to the Zn(2+) binding site. Residue aspartate 74 is part of the active site. Aspartate 105 contacts Zn(2+). Glutamate 137 acts as the Proton acceptor in catalysis. Zn(2+) contacts are provided by glutamate 138, glutamate 167, and histidine 352.

It belongs to the peptidase M20A family. DapE subfamily. In terms of assembly, homodimer. Zn(2+) is required as a cofactor. It depends on Co(2+) as a cofactor.

The enzyme catalyses N-succinyl-(2S,6S)-2,6-diaminopimelate + H2O = (2S,6S)-2,6-diaminopimelate + succinate. Its pathway is amino-acid biosynthesis; L-lysine biosynthesis via DAP pathway; LL-2,6-diaminopimelate from (S)-tetrahydrodipicolinate (succinylase route): step 3/3. Its function is as follows. Catalyzes the hydrolysis of N-succinyl-L,L-diaminopimelic acid (SDAP), forming succinate and LL-2,6-diaminopimelate (DAP), an intermediate involved in the bacterial biosynthesis of lysine and meso-diaminopimelic acid, an essential component of bacterial cell walls. The chain is Succinyl-diaminopimelate desuccinylase from Ehrlichia ruminantium (strain Gardel).